The chain runs to 34 residues: ACLGQWDSCDPKASKCCPNYACEWKYPWCRYKLF.

3 disulfides stabilise this stretch: Cys2/Cys17, Cys9/Cys22, and Cys16/Cys29. Residue Phe34 is modified to Phenylalanine amide.

Belongs to the neurotoxin 10 (Hwtx-1) family. Expressed by the venom gland.

The protein localises to the secreted. In terms of biological role, voltage-gated sodium channel inhibitor. It is unclear if it selectively inhibits Nav1.7/SCN9A or shows similar potency on all sodium channels tested. According to Escoubas et al., 2006 and Nicolas et al., 2019, it is selective over Nav1.7/SCN9A (90% inhibition at 1 uM), versus Nav1.4 and Nav1.6 (35% inhibition), and shows a small inhibition on all other sodium channels (except Nav1.8/SCN10A). According to Goncalves et al., 2019, it shows a similar inhibition on almost all sodium channels tested (Nav1.1/SCN1A (IC(50)=280.3 nM), Nav1.2/SCN2A (IC(50)=73.7 nM), Nav1.3/SCN3A (IC(50)=201.5 nM), Nav1.4/SCN4A (IC(50)&gt;2100 nM), Nav1.5/SCN5A (IC(50)=710.6 nM), Nav1.6/SCN8A (IC(50)=491.2 nM), and Nav1.7/SCN9A (IC(50)=254.3-260 nM)), except Nav1.8/SCN10A. The voltage-dependence of steady-state Nav1.7/SCN9A channel activation and inactivation are not affected, suggesting that is does not act as a gating-modifier toxin but rather blocks or impedes ion flux through the channel pore. The toxin effect is partial and poorly reversible. In addition to its inhibition to sodium channels, it also shows a small inhibition on rat Kv3.4/KCNC4 potassium channels (20% inhibition at 1 uM). In vivo, when tested on pain models, it shows analgesic activity. The polypeptide is Mu-theraphotoxin-Pspp1 (Phlogiellus sp. (Tarantula)).